A 121-amino-acid chain; its full sequence is Large ribosomal subunit protein uL14 (121 aa).

Belongs to the universal ribosomal protein uL14 family. In terms of assembly, part of the 50S ribosomal subunit. Forms a cluster with proteins L3 and L19. In the 70S ribosome, L14 and L19 interact and together make contacts with the 16S rRNA in bridges B5 and B8.

Functionally, binds to 23S rRNA. Forms part of two intersubunit bridges in the 70S ribosome. This is Large ribosomal subunit protein uL14 from Bacteroides fragilis (strain ATCC 25285 / DSM 2151 / CCUG 4856 / JCM 11019 / LMG 10263 / NCTC 9343 / Onslow / VPI 2553 / EN-2).